Consider the following 334-residue polypeptide: Photosystem II assembly protein Ycf48 (334 aa).

The first 22 residues, 1–22 (MAKMLKLWRLVLLAAFSLLLMA), serve as a signal peptide directing secretion.

Belongs to the Ycf48 family. As to quaternary structure, part of early PSII assembly complexes which includes D1 (psbA) and PsbI; not found in mature PSII. Binds to the lumenal side of PSII complexes. Interacts with YidC.

It localises to the cellular thylakoid lumen. A factor required for optimal assembly of photosystem II (PSII), acting in the early stages of PSII assembly. Also plays a role in replacement of photodamaged D1 (psbA). Assists YidC in synthesis of chlorophyll-binding proteins. This Synechococcus sp. (strain JA-3-3Ab) (Cyanobacteria bacterium Yellowstone A-Prime) protein is Photosystem II assembly protein Ycf48.